Consider the following 256-residue polypeptide: Isoprenyl transferase (256 aa).

A disordered region spans residues 1–22; that stretch reads MLEKFSKWKGNRSNHTTPSHSL. Asp36 is a catalytic residue. Asp36 is a Mg(2+) binding site. Residues 37-40, Trp41, Arg49, His53, and 81-83 each bind substrate; these read GNGR and STE. Asn84 serves as the catalytic Proton acceptor. Residues Trp85, Arg87, Arg204, and 210–212 contribute to the substrate site; that span reads RLS. Glu223 contributes to the Mg(2+) binding site.

This sequence belongs to the UPP synthase family. As to quaternary structure, homodimer. Requires Mg(2+) as cofactor.

Its function is as follows. Catalyzes the condensation of isopentenyl diphosphate (IPP) with allylic pyrophosphates generating different type of terpenoids. In Halalkalibacterium halodurans (strain ATCC BAA-125 / DSM 18197 / FERM 7344 / JCM 9153 / C-125) (Bacillus halodurans), this protein is Isoprenyl transferase.